Consider the following 65-residue polypeptide: MRCVPVFIILLLLIPSAPSVDAQRKTKDDVPLASFHDNAKRTLKRLWNKRSCCPQEFLCCLYLVK.

An N-terminal signal peptide occupies residues 1-22 (MRCVPVFIILLLLIPSAPSVDA). Residues 23–50 (QRKTKDDVPLASFHDNAKRTLKRLWNKR) constitute a propeptide that is removed on maturation.

It belongs to the conotoxin T superfamily. Contains 2 disulfide bonds that can be either 'C1-C3, C2-C4' or 'C1-C4, C2-C3', since these disulfide connectivities have been observed for conotoxins with cysteine framework V (for examples, see AC P0DQQ7 and AC P81755). In terms of tissue distribution, expressed by the venom duct.

It is found in the secreted. This Conus leopardus (Leopard cone) protein is Conotoxin Lp5.1.